We begin with the raw amino-acid sequence, 797 residues long: N-acetylneuraminate (7)9-O-acetyltransferase (797 aa).

Topologically, residues 1–18 (MAALAYNLGKREINHYFS) are cytoplasmic. The helical transmembrane segment at 19–39 (VRSAKVLALVAVLLLAACHLA) threads the bilayer. The Lumenal portion of the chain corresponds to 40–313 (SRRYRGNDSC…QPRPPVTLIQ (274 aa)). Asn46 carries N-linked (GlcNAc...) asparagine glycosylation. Ser94 (acyl-ester intermediate) is an active-site residue. Residues Asn175 and Asn187 are each glycosylated (N-linked (GlcNAc...) asparagine). Catalysis depends on residues Asp270 and His273. The helical transmembrane segment at 314–334 (KLAACFFTLSIIGYLIFYIIH) threads the bilayer. The Cytoplasmic segment spans residues 335–363 (RNAHRKNKPCTDLESGEEKKNIINTPVSS). The chain crosses the membrane as a helical span at residues 364 to 384 (LEILLQSFCKLGLIMAYFYMC). Topologically, residues 385-395 (DRANLFMKENK) are lumenal. The chain crosses the membrane as a helical span at residues 396–416 (FYTHSSFFIPIIYILVLGVFY). Residues 417-439 (NENTKETKVLNREQTDEWKGWMQ) lie on the Cytoplasmic side of the membrane. A helical transmembrane segment spans residues 440–460 (LVILIYHISGASTFLPVYMHI). A topological domain (lumenal) is located at residue Arg461. The chain crosses the membrane as a helical span at residues 462–482 (VLVAAYLFQTGYGHFSYFWIK). Residues 483 to 486 (GDFG) lie on the Cytoplasmic side of the membrane. A helical transmembrane segment spans residues 487–507 (IYRVCQVLFRLNFLVVVLCIV). The Lumenal portion of the chain corresponds to 508 to 513 (MDRPYQ). The chain crosses the membrane as a helical span at residues 514 to 534 (FYYFVPLVTVWFMVIYVTLAL). The Cytoplasmic segment spans residues 535-547 (WPQIIQKKANGNC). Residues 548-568 (FWHFGLLLKLGFLLLFICFLA) traverse the membrane as a helical segment. The Lumenal portion of the chain corresponds to 569–605 (YSQGAFEKIFSLWPLSKCFELKGNVYEWWFRWRLDRY). A helical transmembrane segment spans residues 606–626 (VVFHGMLFAFIYLALQKRQIL). At 627-638 (SEGKGEPLFSNK) the chain is on the cytoplasmic side. A helical membrane pass occupies residues 639–659 (ISNFLLFISVVSFLTYSIWAS). Over 660–671 (SCKNKAECNELH) the chain is Lumenal. Residues 672 to 692 (PSVSVVQILAFILIRNIPGYA) traverse the membrane as a helical segment. The Cytoplasmic segment spans residues 693–698 (RSVYSS). A helical membrane pass occupies residues 699-719 (FFAWFGKISLELFICQYHIWL). The Lumenal portion of the chain corresponds to 720 to 725 (AADTRG). A helical membrane pass occupies residues 726–746 (ILVLIPGNPMLNIIVSTFIFV). Over 747 to 770 (CVAHEISQITNDLAQIIIPKDNSS) the chain is Cytoplasmic. The helical transmembrane segment at 771-791 (LLKRLACIAAFFCGLLILSSI) threads the bilayer. Residues 792 to 797 (QDKSKH) are Lumenal-facing.

Belongs to the PC-esterase family. CASD1 subfamily. In terms of processing, N-glycosylated. Highly expressed in peripheral B lymphocytes.

It localises to the golgi apparatus membrane. It carries out the reaction CMP-N-acetyl-beta-neuraminate + acetyl-CoA = CMP-N-acetyl-9-O-acetyl-beta-neuraminate + CoA. The enzyme catalyses a ganglioside GD3 (d18:1(4E)) + acetyl-CoA = a ganglioside Ac-O-7-GD3(d18:1(4E)) + CoA. The catalysed reaction is CMP-N-acetyl-beta-neuraminate + acetyl-CoA = CMP-N-acetyl-7-O-acetyl-beta-neuraminate + CoA. Its function is as follows. Key enzyme in the biosynthesis of O-acetylated (O-Ac) sialoglycans such as gangliosides O-AcGD3 and O-AcGD2, which affect various processes such as cell-cell interactions, host-pathogen recognition. Catalyzes the transfer of an acetyl group from a donor, the acetyl-coenzyme-A molecule (acetyl-CoA), to the C7/8/9 OH-position of a sialic acid residue. The primary site of O-acetyl group transfer on sialic acid seems to depend on cell type and can be C7, from which the O-acetyl group could subsequently migrate to the C8 and then to the C9 position, or at C9 with possibility of migrating to the C8 and then to the C7 position. Together with ST8SIA1 (GD3 synthase) it increases the levels of ganglioside Ac-O-7-GD3. Can transfer the acetyl group from acetyl-CoA to free sialate (N-acetylneuraminate, Neu5Ac) in vitro, but has preferred substrate specificity for CMP-activated sialate (CMP-Neu5Ac), resulting in the formation of 9-O-acetylated CMP-Neu5Ac (CMP-Neu5,9Ac2). CMP-Neu5,9Ac2 may be used by sialyltransferases as a sialate donor for glycoconjugate acceptors such as ganglioside GD3. O-acetylation at position C9 of ganglioside GD3 can counteract the pro-apoptotic effects of the ganglioside GD3 in tumor cells. This is N-acetylneuraminate (7)9-O-acetyltransferase from Homo sapiens (Human).